The chain runs to 354 residues: Guanine nucleotide-binding protein G(o) subunit alpha (354 aa).

Residue glycine 2 is the site of N-myristoyl glycine attachment. The S-palmitoyl cysteine moiety is linked to residue cysteine 3. The G-alpha domain occupies 32–354 (KDVKLLLLGA…ANNLRGCGLY (323 aa)). The interval 35 to 48 (KLLLLGAGESGKST) is G1 motif. Residues glutamate 43, lysine 46, serine 47, threonine 48, serine 152, leucine 176, arginine 177, threonine 178, and arginine 179 each coordinate GTP. Residue serine 47 participates in Mg(2+) binding. The tract at residues 174 to 182 (DILRTRVKT) is G2 motif. Threonine 182 is a binding site for Mg(2+). Residues 197–206 (FRLFDVGGQR) form a G3 motif region. The residue at position 205 (glutamine 205) is a 5-glutamyl histamine. The segment at 266–273 (ILFLNKKD) is G4 motif. GTP-binding residues include asparagine 270, aspartate 273, and cysteine 325. Residues 324 to 329 (TCATDT) are G5 motif. Asparagine 346 bears the Deamidated asparagine; in form Alpha-3 mark. Cysteine 351 is lipidated: S-palmitoyl cysteine.

Belongs to the G-alpha family. G(i/o/t/z) subfamily. As to quaternary structure, g proteins are composed of 3 units; alpha, beta and gamma. The alpha chain contains the guanine nucleotide binding site. Forms a complex with GNB1 and GNG3. Interacts with RGS14. Interacts with RGS16. Interacts with RGS19. Interacts (when palmitoylated) with ADGRG3. Post-translationally, deamidation of Asn-346 converts alpha-1 to alpha-3. In terms of processing, histaminylated at Gln-205 residues by TGM2.

The protein resides in the cell membrane. It localises to the membrane. It carries out the reaction GTP + H2O = GDP + phosphate + H(+). With respect to regulation, the GTPase activity is promoted by GTPAse activators, such as RGS14, RGS16 and RGS19. In terms of biological role, guanine nucleotide-binding proteins (G proteins) function as transducers downstream of G protein-coupled receptors (GPCRs) in numerous signaling cascades. The alpha chain contains the guanine nucleotide binding site and alternates between an active, GTP-bound state and an inactive, GDP-bound state. Signaling by an activated GPCR promotes GDP release and GTP binding. The alpha subunit has a low GTPase activity that converts bound GTP to GDP, thereby terminating the signal. Both GDP release and GTP hydrolysis are modulated by numerous regulatory proteins. Signaling is mediated via effector proteins, such as adenylate cyclase. Inhibits adenylate cyclase activity, leading to decreased intracellular cAMP levels. The chain is Guanine nucleotide-binding protein G(o) subunit alpha (GNAO1) from Cricetulus longicaudatus (Long-tailed dwarf hamster).